The sequence spans 476 residues: Growth arrest-specific protein 7 (476 aa).

In terms of domain architecture, SH3 spans 1–62; the sequence is MSGARCRTLY…PASYVQLLEK (62 aa). The WW domain occupies 77–110; it reads VILPPGWQSYLSPQGRRYYVNTTTNETTWERPSS. The segment at 100–171 is disordered; it reads TNETTWERPS…SSPSKKQSKE (72 aa). Residues 108-120 are compositionally biased toward low complexity; that stretch reads PSSSPGIPASPGS. A phosphoserine mark is found at serine 117 and serine 163. A compositionally biased stretch (polar residues) spans 150 to 171; the sequence is RKSTGDSQNLGSSSPSKKQSKE. Residues 196-456 form the F-BAR domain; the sequence is TEWSYCDYFW…LLRKVDPAKD (261 aa). A coiled-coil region spans residues 309–419; the sequence is ENFKKDMKKC…RLEVERVEMI (111 aa).

It localises to the cytoplasm. Its function is as follows. May play a role in promoting maturation and morphological differentiation of cerebellar neurons. The protein is Growth arrest-specific protein 7 (GAS7) of Homo sapiens (Human).